The chain runs to 520 residues: GMP synthase [glutamine-hydrolyzing] (520 aa).

Residues 9–202 (HVLIVDFGSQ…THKIAGLKGD (194 aa)) enclose the Glutamine amidotransferase type-1 domain. Cys-86 serves as the catalytic Nucleophile. Active-site residues include His-176 and Glu-178. Residues 203 to 395 (WTMKAFREEA…LGLPPQFVGR (193 aa)) enclose the GMPS ATP-PPase domain. ATP is bound at residue 230-236 (SGGVDSS).

Homodimer.

It carries out the reaction XMP + L-glutamine + ATP + H2O = GMP + L-glutamate + AMP + diphosphate + 2 H(+). It participates in purine metabolism; GMP biosynthesis; GMP from XMP (L-Gln route): step 1/1. Functionally, catalyzes the synthesis of GMP from XMP. The protein is GMP synthase [glutamine-hydrolyzing] of Phenylobacterium zucineum (strain HLK1).